A 384-amino-acid polypeptide reads, in one-letter code: Histidinol-phosphate aminotransferase 1 (384 aa).

K233 carries the N6-(pyridoxal phosphate)lysine modification.

Belongs to the class-II pyridoxal-phosphate-dependent aminotransferase family. Histidinol-phosphate aminotransferase subfamily. As to quaternary structure, homodimer. Requires pyridoxal 5'-phosphate as cofactor.

The catalysed reaction is L-histidinol phosphate + 2-oxoglutarate = 3-(imidazol-4-yl)-2-oxopropyl phosphate + L-glutamate. The protein operates within amino-acid biosynthesis; L-histidine biosynthesis; L-histidine from 5-phospho-alpha-D-ribose 1-diphosphate: step 7/9. The polypeptide is Histidinol-phosphate aminotransferase 1 (Thiobacillus denitrificans (strain ATCC 25259 / T1)).